Consider the following 358-residue polypeptide: Vesicular integral-membrane protein VIP36 (358 aa).

Residues 1 to 46 (MAAEAWLWRWGWGWGQRCPGRPGLPGPGPSPTTFLHLLLLLGPVAA) form the signal peptide. At 47-324 (DITDGNSEHL…FRNGPLTGWR (278 aa)) the chain is on the lumenal side. One can recognise an L-type lectin-like domain in the interval 54-278 (EHLKREHSLI…DIISIKLFQL (225 aa)). The a carbohydrate site is built by S98 and D133. Positions 164, 166, and 168 each coordinate Ca(2+). Residue 166 to 168 (YPN) coordinates a carbohydrate. N185 carries an N-linked (GlcNAc...) asparagine glycan. H192 is an a carbohydrate binding site. A Ca(2+)-binding site is contributed by D195. C204 and C241 form a disulfide bridge. 262–264 (GDL) is an a carbohydrate binding site. The chain crosses the membrane as a helical span at residues 325–347 (VFLLLLCALLGVVVCAVVGAVVF). Residues 348–358 (QKRQERNKRFY) lie on the Cytoplasmic side of the membrane.

It depends on Ca(2+) as a cofactor.

Its subcellular location is the golgi apparatus membrane. Functionally, plays a role as an intracellular lectin in the early secretory pathway. Interacts with N-acetyl-D-galactosamine and high-mannose type glycans and may also bind to O-linked glycans. Involved in the transport and sorting of glycoproteins carrying high mannose-type glycans. The sequence is that of Vesicular integral-membrane protein VIP36 (Lman2) from Mus musculus (Mouse).